The primary structure comprises 293 residues: Probable E3 ubiquitin-protein ligase RNF144A-A (293 aa).

The segment at 16–237 is TRIAD supradomain; it reads PLVSCKLCLG…YDKGPCRNKL (222 aa). Cysteine 20, cysteine 23, cysteine 43, cysteine 46, cysteine 111, cysteine 116, cysteine 135, cysteine 138, cysteine 143, cysteine 146, histidine 151, cysteine 156, cysteine 186, and cysteine 189 together coordinate Zn(2+). An RING-type 1 zinc finger spans residues 20–70; it reads CKLCLGEFPLEQMTTITQCQCVFCTMCLKQYVELLIKEGFETAISCPDSAC. An IBR-type zinc finger spans residues 91–156; it reads QRYRKLQFEK…KASWHPDQDC (66 aa). An RING-type 2; atypical zinc finger spans residues 186–215; the sequence is CPKCKVYIERDEGCAQMMCKNCKHAFCWYC. Cysteine 199 is a catalytic residue. Cysteine 204, cysteine 207, cysteine 212, cysteine 215, histidine 227, and cysteine 233 together coordinate Zn(2+). A helical transmembrane segment spans residues 251-271; sequence VVGIFAGFGLLLLVASPFLLL.

This sequence belongs to the RBR family. RNF144 subfamily.

The protein resides in the membrane. It catalyses the reaction [E2 ubiquitin-conjugating enzyme]-S-ubiquitinyl-L-cysteine + [acceptor protein]-L-lysine = [E2 ubiquitin-conjugating enzyme]-L-cysteine + [acceptor protein]-N(6)-ubiquitinyl-L-lysine.. It functions in the pathway protein modification; protein ubiquitination. Its function is as follows. E3 ubiquitin-protein ligase which accepts ubiquitin from E2 ubiquitin-conjugating enzymes ube2l3 and ube2l6 in the form of a thioester and then directly transfers the ubiquitin to targeted substrates. The protein is Probable E3 ubiquitin-protein ligase RNF144A-A (rnf144aa) of Danio rerio (Zebrafish).